The following is a 134-amino-acid chain: Arsenate reductase (134 aa).

Catalysis depends on nucleophile residues C11, C83, and C90. 2 disulfides stabilise this stretch: C11-C83 and C83-C90.

This sequence belongs to the low molecular weight phosphotyrosine protein phosphatase family. Thioredoxin-coupled ArsC subfamily.

It localises to the cytoplasm. The enzyme catalyses arsenate + [thioredoxin]-dithiol + H(+) = arsenite + [thioredoxin]-disulfide + H2O. Its function is as follows. Catalyzes the reduction of arsenate [As(V)] to arsenite [As(III)]. The protein is Arsenate reductase of Bacillus cereus (strain Q1).